A 436-amino-acid polypeptide reads, in one-letter code: UPF0597 protein YhaM (436 aa).

Belongs to the UPF0597 family.

In Shigella boydii serotype 18 (strain CDC 3083-94 / BS512), this protein is UPF0597 protein YhaM.